Reading from the N-terminus, the 264-residue chain is Small ribosomal subunit protein eS4 (264 aa).

The region spanning 42–104 (LPLVIIMRNR…TNENFRLLYD (63 aa)) is the S4 RNA-binding domain.

Belongs to the eukaryotic ribosomal protein eS4 family.

The protein resides in the cytoplasm. The chain is Small ribosomal subunit protein eS4 (RPS4) from Solanum tuberosum (Potato).